Reading from the N-terminus, the 122-residue chain is Large ribosomal subunit protein uL14 (122 aa).

Belongs to the universal ribosomal protein uL14 family. As to quaternary structure, part of the 50S ribosomal subunit. Forms a cluster with proteins L3 and L19. In the 70S ribosome, L14 and L19 interact and together make contacts with the 16S rRNA in bridges B5 and B8.

Binds to 23S rRNA. Forms part of two intersubunit bridges in the 70S ribosome. This chain is Large ribosomal subunit protein uL14, found in Geotalea daltonii (strain DSM 22248 / JCM 15807 / FRC-32) (Geobacter daltonii).